Reading from the N-terminus, the 328-residue chain is Serine protease 27 (328 aa).

The signal sequence occupies residues methionine 1–glycine 22. Positions alanine 23 to arginine 37 are cleaved as a propeptide — activation peptide. A Peptidase S1 domain is found at methionine 38–proline 280. A disulfide bond links cysteine 63 and cysteine 79. The active-site Charge relay system is the histidine 78. An N-linked (GlcNAc...) asparagine glycan is attached at asparagine 82. The Charge relay system role is filled by aspartate 127. 3 disulfides stabilise this stretch: cysteine 161-cysteine 238, cysteine 194-cysteine 217, and cysteine 228-cysteine 256. The Charge relay system role is filled by serine 232.

It belongs to the peptidase S1 family.

It localises to the secreted. In Rattus norvegicus (Rat), this protein is Serine protease 27 (Prss27).